The chain runs to 78 residues: Antitoxin VapB2 (78 aa).

In terms of domain architecture, SpoVT-AbrB spans Ala4–Asn44.

The protein belongs to the VapB family. Forms complexes with VapC2; probably VapC2(4):VapB2(2) in the absence of DNA, and VapC2(4):VapB2(4) in the presence of DNA. Crystallizes as heterodimers with stoichiometry VapC2(4):VapB2(4) in the presence of its probable promoter DNA. The heterodimers are in contact via alternative VapC-VapC and VapB-VapB interactions. This subunit contacts DNA.

Its function is as follows. Antitoxin component of a type II toxin-antitoxin (TA) system. Upon expression in E.coli or S.cerevisiae neutralizes the effect of cognate toxin VapC2, partially inhibits the RNase activity of VapC2. The protein is Antitoxin VapB2 (vapB2) of Rickettsia felis (strain ATCC VR-1525 / URRWXCal2) (Rickettsia azadi).